A 298-amino-acid chain; its full sequence is Acetaldehyde dehydrogenase (298 aa).

6 to 9 (SGNI) serves as a coordination point for NAD(+). C121 (acyl-thioester intermediate) is an active-site residue. NAD(+) is bound by residues 152-160 (SAGPGTRAN) and N271.

This sequence belongs to the acetaldehyde dehydrogenase family.

The catalysed reaction is acetaldehyde + NAD(+) + CoA = acetyl-CoA + NADH + H(+). The protein is Acetaldehyde dehydrogenase of Mycobacterium avium (strain 104).